We begin with the raw amino-acid sequence, 28 residues long: Cycloviolin-B (28 aa).

The cyclopeptide (Gly-Asn) cross-link spans 1–28 (GTACGESCYVLPCFTVGCTCTSSQCFKN). Intrachain disulfides connect Cys4-Cys18, Cys8-Cys20, and Cys13-Cys25.

In terms of processing, this is a cyclic peptide.

Functionally, probably participates in a plant defense mechanism. Has anti-HIV activity. In Leonia cymosa (Sacha uba), this protein is Cycloviolin-B.